The sequence spans 155 residues: D-aminoacyl-tRNA deacylase (155 aa).

The Gly-cisPro motif, important for rejection of L-amino acids motif lies at 137 to 138 (GP).

It belongs to the DTD family. Homodimer.

It localises to the cytoplasm. The enzyme catalyses glycyl-tRNA(Ala) + H2O = tRNA(Ala) + glycine + H(+). It catalyses the reaction a D-aminoacyl-tRNA + H2O = a tRNA + a D-alpha-amino acid + H(+). Its function is as follows. An aminoacyl-tRNA editing enzyme that deacylates mischarged D-aminoacyl-tRNAs. Also deacylates mischarged glycyl-tRNA(Ala), protecting cells against glycine mischarging by AlaRS. Acts via tRNA-based rather than protein-based catalysis; rejects L-amino acids rather than detecting D-amino acids in the active site. By recycling D-aminoacyl-tRNA to D-amino acids and free tRNA molecules, this enzyme counteracts the toxicity associated with the formation of D-aminoacyl-tRNA entities in vivo and helps enforce protein L-homochirality. In Nitrosococcus oceani (strain ATCC 19707 / BCRC 17464 / JCM 30415 / NCIMB 11848 / C-107), this protein is D-aminoacyl-tRNA deacylase.